Here is a 242-residue protein sequence, read N- to C-terminus: Leucyl/phenylalanyl-tRNA--protein transferase (242 aa).

It belongs to the L/F-transferase family.

The protein localises to the cytoplasm. It carries out the reaction N-terminal L-lysyl-[protein] + L-leucyl-tRNA(Leu) = N-terminal L-leucyl-L-lysyl-[protein] + tRNA(Leu) + H(+). The catalysed reaction is N-terminal L-arginyl-[protein] + L-leucyl-tRNA(Leu) = N-terminal L-leucyl-L-arginyl-[protein] + tRNA(Leu) + H(+). It catalyses the reaction L-phenylalanyl-tRNA(Phe) + an N-terminal L-alpha-aminoacyl-[protein] = an N-terminal L-phenylalanyl-L-alpha-aminoacyl-[protein] + tRNA(Phe). In terms of biological role, functions in the N-end rule pathway of protein degradation where it conjugates Leu, Phe and, less efficiently, Met from aminoacyl-tRNAs to the N-termini of proteins containing an N-terminal arginine or lysine. The polypeptide is Leucyl/phenylalanyl-tRNA--protein transferase (Edwardsiella ictaluri (strain 93-146)).